A 723-amino-acid polypeptide reads, in one-letter code: Catalase-peroxidase (723 aa).

A cross-link (tryptophyl-tyrosyl-methioninium (Trp-Tyr) (with M-251)) is located at residues 96–225; sequence WHAAGSYRVA…LAAVMMGLIY (130 aa). H97 serves as the catalytic Proton acceptor. The tryptophyl-tyrosyl-methioninium (Tyr-Met) (with W-96) cross-link spans 225–251; sequence YVNPEGVDGNPDPLKTAEDVRVTFARM. Residue H266 coordinates heme b.

The protein belongs to the peroxidase family. Peroxidase/catalase subfamily. As to quaternary structure, homodimer or homotetramer. Heme b is required as a cofactor. Post-translationally, formation of the three residue Trp-Tyr-Met cross-link is important for the catalase, but not the peroxidase activity of the enzyme.

It catalyses the reaction H2O2 + AH2 = A + 2 H2O. The enzyme catalyses 2 H2O2 = O2 + 2 H2O. Its function is as follows. Bifunctional enzyme with both catalase and broad-spectrum peroxidase activity. The polypeptide is Catalase-peroxidase (Alkalilimnicola ehrlichii (strain ATCC BAA-1101 / DSM 17681 / MLHE-1)).